A 302-amino-acid chain; its full sequence is Phosphoribosylaminoimidazole-succinocarboxamide synthase (302 aa).

It belongs to the SAICAR synthetase family.

The enzyme catalyses 5-amino-1-(5-phospho-D-ribosyl)imidazole-4-carboxylate + L-aspartate + ATP = (2S)-2-[5-amino-1-(5-phospho-beta-D-ribosyl)imidazole-4-carboxamido]succinate + ADP + phosphate + 2 H(+). It functions in the pathway purine metabolism; IMP biosynthesis via de novo pathway; 5-amino-1-(5-phospho-D-ribosyl)imidazole-4-carboxamide from 5-amino-1-(5-phospho-D-ribosyl)imidazole-4-carboxylate: step 1/2. The sequence is that of Phosphoribosylaminoimidazole-succinocarboxamide synthase from Cupriavidus pinatubonensis (strain JMP 134 / LMG 1197) (Cupriavidus necator (strain JMP 134)).